The sequence spans 262 residues: Flap endonuclease Xni (262 aa).

Aspartate 109 contributes to the Mg(2+) binding site. Residues 165-255 (LKPEQLADYW…FNLQDIRYEK (91 aa)) enclose the 5'-3' exonuclease domain. K(+) is bound by residues leucine 176, alanine 177, isoleucine 187, and valine 190. The interval 189–194 (GVGPKA) is interaction with DNA.

Belongs to the Xni family. Mg(2+) serves as cofactor. K(+) is required as a cofactor.

In terms of biological role, has flap endonuclease activity. During DNA replication, flap endonucleases cleave the 5'-overhanging flap structure that is generated by displacement synthesis when DNA polymerase encounters the 5'-end of a downstream Okazaki fragment. This is Flap endonuclease Xni from Aliivibrio fischeri (strain MJ11) (Vibrio fischeri).